The primary structure comprises 576 residues: Insulin-like growth factor 2 mRNA-binding protein 1 (576 aa).

2 RRM domains span residues 2–75 and 81–156; these read NKLY…HSVP and RKIQ…YIPD. Residues 158–189 are disordered; the sequence is QSVQGPENGRRGGFGARGAPRQGSPVTAGAPV. 2 consecutive KH domains span residues 195-260 and 276-343; these read DIPL…CKMI and EVPL…EQEI. At Tyr396 the chain carries Phosphotyrosine; by SRC. 2 KH domains span residues 404–469 and 486–552; these read QETV…QGRI and KLET…QRKI.

Belongs to the RRM IMP/VICKZ family. As to quaternary structure, can form homooligomers and heterooligomers with IGF2BP1 and IGF2BP3 in an RNA-dependent manner. Associates with the cytoskeleton, predominantly with actin filament bundles and occasionally with microtubules. In a heterologous system, interacts with ELAVL1, DHX9 and HNRNPU. Post-translationally, phosphorylated by SRC at Tyr-396. This residue is involved in ACTB mRNA binding, its phosphorylation impairs association with ACTB mRNA and hence abolishes translational repression. Phosphorylation occurs in close proximity to filopodia and in the growth cones of differentiated neuroglioblastoma cells. In terms of tissue distribution, expressed in neurons and embryonic fibroblasts (at protein level).

It is found in the nucleus. It localises to the cytoplasm. The protein resides in the perinuclear region. The protein localises to the P-body. Its subcellular location is the stress granule. It is found in the cell projection. It localises to the growth cone. The protein resides in the filopodium. The protein localises to the lamellipodium. Functionally, RNA-binding factor that recruits target transcripts to cytoplasmic protein-RNA complexes (mRNPs). This transcript 'caging' into mRNPs allows mRNA transport and transient storage. It also modulates the rate and location at which target transcripts encounter the translational apparatus and shields them from endonuclease attacks or microRNA-mediated degradation. Preferentially binds to N6-methyladenosine (m6A)-containing mRNAs and increases their stability. Plays a direct role in the transport and translation of transcripts required for axonal regeneration in adult sensory neurons. Regulates localized beta-actin/ACTB mRNA translation in polarized cells, a crucial process for cell migration and neurite outgrowth. Co-transcriptionally associates with the ACTB mRNA in the nucleus. This binding involves by a conserved 54-nucleotide element in the ACTB mRNA 3'-UTR, known as the 'zipcode'. The ribonucleoparticle (RNP) thus formed is exported to the cytoplasm, binds to a motor protein and is transported along the cytoskeleton to the cell periphery. During transport, IGF2BP1 prevents beta-actin mRNA from being translated into protein. When the RNP complex reaches its destination near the plasma membrane, IGF2BP1 is phosphorylated by SRC. This releases the mRNA, allowing ribosomal 40S and 60S subunits to assemble and initiate ACTB protein synthesis. The monomeric ACTB protein then assembles into the subcortical actin cytoskeleton, which pushes the leading edge onwards. Binds MYC mRNA. Binding to MYC mRNA is enhanced by m6A-modification of the CRD. Promotes the directed movement of cells by fine-tuning intracellular signaling networks. Binds to MAPK4 3'-UTR and inhibits its translation. Interacts with PTEN transcript open reading frame (ORF) and prevents mRNA decay. This combined action on MAPK4 (down-regulation) and PTEN (up-regulation) antagonizes HSPB1 phosphorylation, consequently it prevents G-actin sequestration by phosphorylated HSPB1, allowing F-actin polymerization. Hence enhances the velocity of cell migration and stimulates directed cell migration by PTEN-modulated polarization. The polypeptide is Insulin-like growth factor 2 mRNA-binding protein 1 (IGF2BP1) (Gallus gallus (Chicken)).